The primary structure comprises 352 residues: Protein RecA (352 aa).

67–74 (GPESSGKT) provides a ligand contact to ATP. The disordered stretch occupies residues 332-352 (VKPADAESKEDSPKLKAVDGF). A compositionally biased stretch (basic and acidic residues) spans 335–352 (ADAESKEDSPKLKAVDGF).

Belongs to the RecA family.

It localises to the cytoplasm. Can catalyze the hydrolysis of ATP in the presence of single-stranded DNA, the ATP-dependent uptake of single-stranded DNA by duplex DNA, and the ATP-dependent hybridization of homologous single-stranded DNAs. It interacts with LexA causing its activation and leading to its autocatalytic cleavage. In Pseudarthrobacter chlorophenolicus (strain ATCC 700700 / DSM 12829 / CIP 107037 / JCM 12360 / KCTC 9906 / NCIMB 13794 / A6) (Arthrobacter chlorophenolicus), this protein is Protein RecA.